We begin with the raw amino-acid sequence, 467 residues long: Fumarate hydratase class II (467 aa).

Substrate-binding positions include 98-100 (SGT), Arg-126, 129-132 (HPND), 139-141 (SSN), and Thr-187. His-188 serves as the catalytic Proton donor/acceptor. Ser-318 is an active-site residue. Substrate is bound by residues Ser-319 and 324 to 326 (KVN).

It belongs to the class-II fumarase/aspartase family. Fumarase subfamily. As to quaternary structure, homotetramer.

The protein localises to the cytoplasm. The catalysed reaction is (S)-malate = fumarate + H2O. It participates in carbohydrate metabolism; tricarboxylic acid cycle; (S)-malate from fumarate: step 1/1. Functionally, involved in the TCA cycle. Catalyzes the stereospecific interconversion of fumarate to L-malate. This is Fumarate hydratase class II from Salmonella typhimurium (strain LT2 / SGSC1412 / ATCC 700720).